The primary structure comprises 250 residues: Small ribosomal subunit protein uS3 (250 aa).

The 69-residue stretch at 39-107 (VREFLTKKLK…PAQVSINEID (69 aa)) folds into the KH type-2 domain. The segment at 215-250 (MNPAPAEERPAKRGRGRGEGQERRGRRGDRAADKGE) is disordered. The segment covering 220–250 (AEERPAKRGRGRGEGQERRGRRGDRAADKGE) has biased composition (basic and acidic residues).

It belongs to the universal ribosomal protein uS3 family. In terms of assembly, part of the 30S ribosomal subunit. Forms a tight complex with proteins S10 and S14.

Binds the lower part of the 30S subunit head. Binds mRNA in the 70S ribosome, positioning it for translation. This Acinetobacter baumannii (strain SDF) protein is Small ribosomal subunit protein uS3.